The following is a 358-amino-acid chain: Aminodeoxyfutalosine deaminase (358 aa).

Zn(2+) contacts are provided by histidine 32 and histidine 34. Substrate is bound by residues arginine 87, aspartate 154, and glycine 188. Residue histidine 215 participates in Zn(2+) binding. The active-site Proton donor is the glutamate 218. A Zn(2+)-binding site is contributed by aspartate 296.

The protein belongs to the metallo-dependent hydrolases superfamily. Adenosine and AMP deaminases family. It depends on Zn(2+) as a cofactor.

The catalysed reaction is 6-amino-6-deoxyfutalosine + H2O + H(+) = futalosine + NH4(+). Its pathway is quinol/quinone metabolism; menaquinone biosynthesis. Its function is as follows. Catalyzes the deamination of aminodeoxyfutalosine (AFL) into futalosine (FL), a step in the biosynthesis of menaquinone (MK, vitamin K2). To a lesser extent, can also deaminate adenosine, 5'-methylthioadenosine, 5'-deoxyadenosine, and 2'-deoxyadenosine. This Streptomyces avermitilis (strain ATCC 31267 / DSM 46492 / JCM 5070 / NBRC 14893 / NCIMB 12804 / NRRL 8165 / MA-4680) protein is Aminodeoxyfutalosine deaminase (add2).